The chain runs to 99 residues: Ubiquitin-related modifier 1 homolog (99 aa).

A 1-thioglycine modification is found at G99. G99 participates in a covalent cross-link: Glycyl lysine isopeptide (Gly-Lys) (interchain with K-? in acceptor proteins).

Belongs to the URM1 family. As to quaternary structure, interacts with cer. C-terminal thiocarboxylation occurs in 2 steps, it is first acyl-adenylated (-COAMP) via the hesA/moeB/thiF part of the MOCS3 homolog, then thiocarboxylated (-COSH) via the rhodanese domain of the MOCS3 homolog.

The protein localises to the cytoplasm. It participates in tRNA modification; 5-methoxycarbonylmethyl-2-thiouridine-tRNA biosynthesis. Functionally, acts as a sulfur carrier required for 2-thiolation of mcm(5)S(2)U at tRNA wobble positions of cytosolic tRNA(Lys), tRNA(Glu) and tRNA(Gln). Serves as sulfur donor in tRNA 2-thiolation reaction by being thiocarboxylated (-COSH) at its C-terminus by MOCS3. The sulfur is then transferred to tRNA to form 2-thiolation of mcm(5)S(2)U. Also acts as a ubiquitin-like protein (UBL) that is covalently conjugated via an isopeptide bond to lysine residues of target proteins such as Prx2/Jafrac1, Ciao1, Eip71CD and GILT1. The thiocarboxylated form serves as substrate for conjugation and oxidative stress specifically induces the formation of UBL-protein conjugates. In Drosophila persimilis (Fruit fly), this protein is Ubiquitin-related modifier 1 homolog.